A 413-amino-acid chain; its full sequence is Tyrosine--tRNA ligase (413 aa).

Y34 provides a ligand contact to L-tyrosine. Positions 39–48 match the 'HIGH' region motif; that stretch reads PTSHSLTVGH. Positions 164 and 168 each coordinate L-tyrosine. Positions 225-229 match the 'KMSKS' region motif; the sequence is KFGKS. K228 provides a ligand contact to ATP. Residues 347–413 form the S4 RNA-binding domain; that stretch reads ILLVDALVQT…GKKNNALIVF (67 aa).

The protein belongs to the class-I aminoacyl-tRNA synthetase family. TyrS type 1 subfamily. Homodimer.

The protein localises to the cytoplasm. It catalyses the reaction tRNA(Tyr) + L-tyrosine + ATP = L-tyrosyl-tRNA(Tyr) + AMP + diphosphate + H(+). Its function is as follows. Catalyzes the attachment of tyrosine to tRNA(Tyr) in a two-step reaction: tyrosine is first activated by ATP to form Tyr-AMP and then transferred to the acceptor end of tRNA(Tyr). The protein is Tyrosine--tRNA ligase of Aster yellows witches'-broom phytoplasma (strain AYWB).